Here is a 141-residue protein sequence, read N- to C-terminus: Protein stum homolog (141 aa).

Position 26 is a phosphoserine (Ser-26). Transmembrane regions (helical) follow at residues Phe-51–Val-71 and Arg-87–Ala-107.

The protein belongs to the SPEC3 family. Stum subfamily.

It is found in the membrane. The polypeptide is Protein stum homolog (Mus musculus (Mouse)).